Consider the following 125-residue polypeptide: Small ribosomal subunit protein uS12 (125 aa).

The segment at 1–27 is disordered; that stretch reads MPTINQLVRKGREKGEQKSTAPALKSC. At D89 the chain carries 3-methylthioaspartic acid. Positions 103-125 are disordered; the sequence is DASGVQKRNQGRSKYGTKRPKKK. Positions 111–125 are enriched in basic residues; it reads NQGRSKYGTKRPKKK.

The protein belongs to the universal ribosomal protein uS12 family. As to quaternary structure, part of the 30S ribosomal subunit. Contacts proteins S8 and S17. May interact with IF1 in the 30S initiation complex.

With S4 and S5 plays an important role in translational accuracy. Its function is as follows. Interacts with and stabilizes bases of the 16S rRNA that are involved in tRNA selection in the A site and with the mRNA backbone. Located at the interface of the 30S and 50S subunits, it traverses the body of the 30S subunit contacting proteins on the other side and probably holding the rRNA structure together. The combined cluster of proteins S8, S12 and S17 appears to hold together the shoulder and platform of the 30S subunit. The chain is Small ribosomal subunit protein uS12 from Syntrophomonas wolfei subsp. wolfei (strain DSM 2245B / Goettingen).